The primary structure comprises 329 residues: MNKWGVGLTFLLAATSVMAKDIQLLNVSYDPTRELYEQYNKAFSAHWKQQTGDNVVIRQSHGGSGKQATSVINGIEADVVTLALAYDVDAIAERGRIDKEWIKRLPDNSAPYTSTIVFLVRKGNPKQIHDWNDLIKPGVSVITPNPKSSGGARWNYLAAWGYALHHNNNDQAKAQDFVRALYKNVEVLDSGARGSTNTFVERGIGDVLIAWENEALLAANELGKDKFEIVTPSESILAEPTVSVVDKVVEKKGTKEVAEAYLKYLYSPEGQEIAAKNYYRPRDAEVAKKYENAFPKLKLFTIDEEFGGWTKAQKEHFANGGTFDQISKR.

An N-terminal signal peptide occupies residues 1-19 (MNKWGVGLTFLLAATSVMA).

This sequence belongs to the prokaryotic sulfate-binding protein family.

It is found in the periplasm. Functionally, this protein specifically binds sulfate and is involved in its transmembrane transport. The polypeptide is Sulfate-binding protein (sbp) (Escherichia coli (strain K12)).